Reading from the N-terminus, the 337-residue chain is Dihydroorotate dehydrogenase (quinone) (337 aa).

FMN contacts are provided by residues 58–62 and Thr-82; that span reads AGLDK. Residue Lys-62 coordinates substrate. 107-111 is a binding site for substrate; sequence NCMGF. FMN contacts are provided by Asn-137 and Asn-170. Asn-170 is a substrate binding site. Ser-173 (nucleophile) is an active-site residue. Asn-175 lines the substrate pocket. The FMN site is built by Lys-215 and Thr-243. Residue 244–245 coordinates substrate; sequence NT. Residues Gly-266, Gly-294, and 315–316 contribute to the FMN site; that span reads YS.

This sequence belongs to the dihydroorotate dehydrogenase family. Type 2 subfamily. Monomer. FMN serves as cofactor.

The protein localises to the cell membrane. It catalyses the reaction (S)-dihydroorotate + a quinone = orotate + a quinol. It functions in the pathway pyrimidine metabolism; UMP biosynthesis via de novo pathway; orotate from (S)-dihydroorotate (quinone route): step 1/1. Catalyzes the conversion of dihydroorotate to orotate with quinone as electron acceptor. The sequence is that of Dihydroorotate dehydrogenase (quinone) from Dichelobacter nodosus (strain VCS1703A).